The primary structure comprises 255 residues: 5-oxoprolinase subunit A (255 aa).

Belongs to the LamB/PxpA family. As to quaternary structure, forms a complex composed of PxpA, PxpB and PxpC.

The enzyme catalyses 5-oxo-L-proline + ATP + 2 H2O = L-glutamate + ADP + phosphate + H(+). Catalyzes the cleavage of 5-oxoproline to form L-glutamate coupled to the hydrolysis of ATP to ADP and inorganic phosphate. The chain is 5-oxoprolinase subunit A from Thermococcus sibiricus (strain DSM 12597 / MM 739).